A 204-amino-acid chain; its full sequence is MQNPLPEVMSPEHDKRTTTPMSKEANKFIRELDKKPGDLAVVSDFVKRNTGKRLPIGKRSNLYVRICDLSGTIYMGETFILESWEELYLPEPTKMEVLGTLESCCGIPPFPEWIVMVGEDQCVYAYGDEEILLFAYSVKQLVEEGIQETGISYKYPDDISDVDEEVLQQDEEIQKIRKKTREFVDKDAQEFQDFLNSLDASLLS.

The disordered stretch occupies residues 1 to 20; that stretch reads MQNPLPEVMSPEHDKRTTTP.

This is an uncharacterized protein from Frog virus 3 (isolate Goorha) (FV-3).